The following is a 434-amino-acid chain: Exopolygalacturonase X-1 (434 aa).

The N-terminal stretch at 1 to 22 is a signal peptide; the sequence is MKLSHLLTSAVSVLSLGLTVEG. N-linked (GlcNAc...) asparagine glycans are attached at residues Asn-113, Asn-129, and Asn-199. A PbH1 1 repeat occupies 231–252; that stretch reads SKNIVIQNSVINNGDDCVSFKP. Asp-245 serves as the catalytic Proton donor. The cysteines at positions 247 and 264 are disulfide-linked. Residues Asn-253 and Asn-265 are each glycosylated (N-linked (GlcNAc...) asparagine). Residues 254 to 274 form a PbH1 2 repeat; the sequence is STEILVQNLYCNGSHGISVGS. Residue His-268 is part of the active site. Asn-292, Asn-297, Asn-329, Asn-354, and Asn-364 each carry an N-linked (GlcNAc...) asparagine glycan. Residues 327 to 348 form a PbH1 3 repeat; that stretch reads VSNITYEDMYIENVDWAIEITQ. One copy of the PbH1 4 repeat lies at 362–405; the sequence is PSNLTISDVYISNMYGTTSSARDPNIGTIVCSSPDVCSNIYVEN. Cys-392 and Cys-398 are oxidised to a cystine. Asn-423 and Asn-430 each carry an N-linked (GlcNAc...) asparagine glycan.

This sequence belongs to the glycosyl hydrolase 28 family.

It is found in the secreted. The enzyme catalyses [(1-&gt;4)-alpha-D-galacturonosyl](n) + H2O = alpha-D-galacturonate + [(1-&gt;4)-alpha-D-galacturonosyl](n-1). Its function is as follows. Specific in hydrolyzing the terminal glycosidic bond of polygalacturonic acid and oligogalacturonates. The sequence is that of Exopolygalacturonase X-1 (pgaX-1) from Emericella nidulans (strain FGSC A4 / ATCC 38163 / CBS 112.46 / NRRL 194 / M139) (Aspergillus nidulans).